A 172-amino-acid polypeptide reads, in one-letter code: Acetolactate synthase small subunit (172 aa).

The region spanning 4–78 (TLSVLVEDEA…NVIKVQDITE (75 aa)) is the ACT domain.

It belongs to the acetolactate synthase small subunit family. In terms of assembly, dimer of large and small chains.

It carries out the reaction 2 pyruvate + H(+) = (2S)-2-acetolactate + CO2. It participates in amino-acid biosynthesis; L-isoleucine biosynthesis; L-isoleucine from 2-oxobutanoate: step 1/4. Its pathway is amino-acid biosynthesis; L-valine biosynthesis; L-valine from pyruvate: step 1/4. The protein is Acetolactate synthase small subunit (ilvH) of Synechocystis sp. (strain ATCC 27184 / PCC 6803 / Kazusa).